The sequence spans 89 residues: uncharacterized protein (89 aa).

The disordered stretch occupies residues 31 to 89 (TPQPLEPHEHPKPMEPNEFDPKPDDPPRNPDPSPFPNEVPKPKPSDFPIPDELYPQPIV). Over residues 36-58 (EPHEHPKPMEPNEFDPKPDDPPR) the composition is skewed to basic and acidic residues. Pro residues predominate over residues 59-69 (NPDPSPFPNEV).

This is an uncharacterized protein from Dictyostelium discoideum (Social amoeba).